Reading from the N-terminus, the 211-residue chain is Peptidyl-tRNA hydrolase (211 aa).

A tRNA-binding site is contributed by tyrosine 15. Residue histidine 20 is the Proton acceptor of the active site. The tRNA site is built by phenylalanine 66, asparagine 68, and asparagine 114. The tract at residues 189 to 211 (TKPPRPKATRPAQAQAAPQAGAD) is disordered. Residues 197–211 (TRPAQAQAAPQAGAD) are compositionally biased toward low complexity.

It belongs to the PTH family. As to quaternary structure, monomer.

It is found in the cytoplasm. The catalysed reaction is an N-acyl-L-alpha-aminoacyl-tRNA + H2O = an N-acyl-L-amino acid + a tRNA + H(+). Hydrolyzes ribosome-free peptidyl-tRNAs (with 1 or more amino acids incorporated), which drop off the ribosome during protein synthesis, or as a result of ribosome stalling. In terms of biological role, catalyzes the release of premature peptidyl moieties from peptidyl-tRNA molecules trapped in stalled 50S ribosomal subunits, and thus maintains levels of free tRNAs and 50S ribosomes. The chain is Peptidyl-tRNA hydrolase from Acidovorax ebreus (strain TPSY) (Diaphorobacter sp. (strain TPSY)).